The primary structure comprises 572 residues: Asparagine--tRNA ligase, cytoplasmic 1 (572 aa).

Ala-2 carries the N-acetylalanine modification. A DNA-binding region (OB) is located at residues 53–131; sequence VRIGGWVKSG…QQIELNVVKV (79 aa). The WHEP-TRS domain maps to 236–292; sequence DVEAARLIVIERGNVVAELKAAKASKEAITAAVAELKIAKETFAHIDERSRLRPGLP.

It belongs to the class-II aminoacyl-tRNA synthetase family.

It localises to the cytoplasm. The protein localises to the cytosol. It catalyses the reaction tRNA(Asn) + L-asparagine + ATP = L-asparaginyl-tRNA(Asn) + AMP + diphosphate + H(+). This chain is Asparagine--tRNA ligase, cytoplasmic 1, found in Arabidopsis thaliana (Mouse-ear cress).